The chain runs to 190 residues: uncharacterized protein (190 aa).

Over 1-16 the chain is Cytoplasmic; the sequence is MAILPEFISQTPPVTR. The chain crosses the membrane as a helical span at residues 17-37; sequence YIVLGTLFTTLAVNFGYVSDL. The Lumenal portion of the chain corresponds to 38–55; that stretch reads KIFFNWKLFLAKGEYWRA. Residues 56–76 traverse the membrane as a helical segment; it reads ITTFLYVGPFGLELILYLSFL. Topologically, residues 77 to 98 are cytoplasmic; it reads LRFMSMLERSSPPPQTQSFLKT. The chain crosses the membrane as a helical span at residues 99-119; the sequence is VLIVWFSLLVTSYFSYMPFAA. Residues 120–138 are Lumenal-facing; that stretch reads SYFSFTMLYIWSWKHPLYR. A helical transmembrane segment spans residues 139–159; the sequence is ISILGLFDVKAPYVPWVMVLL. Residues 160 to 163 lie on the Cytoplasmic side of the membrane; it reads RWLR. Residues 164–184 form a helical membrane-spanning segment; that stretch reads TGIFPLLDLISALIGHVYFFV. The Lumenal portion of the chain corresponds to 185–190; that stretch reads TDFSTV.

Belongs to the derlin family.

It localises to the endoplasmic reticulum membrane. This is an uncharacterized protein from Schizosaccharomyces pombe (strain 972 / ATCC 24843) (Fission yeast).